The chain runs to 403 residues: Envelope glycoprotein D (403 aa).

A signal peptide spans 1-34; it reads MNRYRYESIFFRYISSTRMILIICLLLGIGDMSA. The Virion surface segment spans residues 35-357; it reads MGLKKDNSPI…ISTEKKSRTQ (323 aa). Residues Asn-87 and Asn-138 are each glycosylated (N-linked (GlcNAc...) asparagine; by host). 3 cysteine pairs are disulfide-bonded: Cys-88-Cys-209, Cys-127-Cys-222, and Cys-139-Cys-148. Residues Asn-230 and Asn-306 are each glycosylated (N-linked (GlcNAc...) asparagine; by host). A helical membrane pass occupies residues 358-378; sequence IIISLVVLCVMFCFIVIGSGI. Topologically, residues 379 to 403 are intravirion; the sequence is WILRKHRKTVMYDRRRPSRRAYSRL.

Belongs to the herpesviridae glycoprotein D family.

It is found in the virion membrane. Its function is as follows. Envelope glycoprotein that binds to host cell entry receptors, promoting the virus entry into host cells. May trigger fusion with host membrane, by recruiting the fusion machinery composed of gB and gH/gL. The polypeptide is Envelope glycoprotein D (MDV094) (Gallus gallus (Chicken)).